Reading from the N-terminus, the 251-residue chain is Triosephosphate isomerase (251 aa).

Position 9–11 (9–11) interacts with substrate; the sequence is NWK. H95 (electrophile) is an active-site residue. E167 functions as the Proton acceptor in the catalytic mechanism. Residues G173, S213, and 234 to 235 contribute to the substrate site; that span reads GG.

This sequence belongs to the triosephosphate isomerase family. As to quaternary structure, homodimer.

It localises to the cytoplasm. The enzyme catalyses D-glyceraldehyde 3-phosphate = dihydroxyacetone phosphate. Its pathway is carbohydrate biosynthesis; gluconeogenesis. It functions in the pathway carbohydrate degradation; glycolysis; D-glyceraldehyde 3-phosphate from glycerone phosphate: step 1/1. Its function is as follows. Involved in the gluconeogenesis. Catalyzes stereospecifically the conversion of dihydroxyacetone phosphate (DHAP) to D-glyceraldehyde-3-phosphate (G3P). The sequence is that of Triosephosphate isomerase from Pelobacter propionicus (strain DSM 2379 / NBRC 103807 / OttBd1).